A 353-amino-acid chain; its full sequence is Very-long-chain 3-oxoacyl-CoA reductase (353 aa).

Residues 33-53 (AAWALIAAGGFFVISRALLFG) form a helical membrane-spanning segment. Positions 78, 133, 141, 160, 227, 231, 260, and 262 each coordinate NADP(+). Tyrosine 227 acts as the Proton donor in catalysis. The Lowers pKa of active site Tyr role is filled by lysine 231.

This sequence belongs to the short-chain dehydrogenases/reductases (SDR) family.

The protein localises to the endoplasmic reticulum membrane. The enzyme catalyses a very-long-chain (3R)-3-hydroxyacyl-CoA + NADP(+) = a very-long-chain 3-oxoacyl-CoA + NADPH + H(+). It participates in lipid metabolism; fatty acid biosynthesis. Functionally, component of the microsomal membrane bound fatty acid elongation system, which produces the 26-carbon very long-chain fatty acids (VLCFA) from palmitate. Catalyzes the reduction of the 3-ketoacyl-CoA intermediate that is formed in each cycle of fatty acid elongation. VLCFAs serve as precursors for ceramide and sphingolipids. The polypeptide is Very-long-chain 3-oxoacyl-CoA reductase (Aspergillus terreus (strain NIH 2624 / FGSC A1156)).